A 134-amino-acid polypeptide reads, in one-letter code: Thyrotropin subunit beta (134 aa).

The N-terminal stretch at 1 to 16 is a signal peptide; sequence MSPFFMMSLLFGLTFG. 6 disulfide bridges follow: Cys-22-Cys-72, Cys-36-Cys-87, Cys-39-Cys-125, Cys-47-Cys-103, Cys-51-Cys-105, and Cys-108-Cys-115. An N-linked (GlcNAc...) asparagine glycan is attached at Asn-43.

Belongs to the glycoprotein hormones subunit beta family. Heterodimer of a common alpha chain and a unique beta chain which confers biological specificity to thyrotropin, lutropin, follitropin and gonadotropin.

The protein resides in the secreted. In terms of biological role, indispensable for the control of thyroid structure and metabolism. This is Thyrotropin subunit beta (TSHB) from Gallus gallus (Chicken).